A 367-amino-acid polypeptide reads, in one-letter code: Polygalacturonase (367 aa).

A signal peptide spans 1-19 (MSIRLIAVLSAASIAVTSA). A disulfide bridge connects residues Cys-27 and Cys-42. N-linked (GlcNAc...) asparagine glycosylation occurs at Asn-185. The stretch at 187–208 (TDQLTIEDTVVKNQDDCIAVNQ) is one PbH1 1 repeat. The active-site Proton donor is Asp-201. Cys-203 and Cys-219 are joined by a disulfide. The active site involves His-223. A PbH1 2 repeat occupies 240–261 (VRNVTFSNSVVRKSRNGIHIKT). Asn-242 is a glycosylation site (N-linked (GlcNAc...) asparagine). A disulfide bridge connects residues Cys-334 and Cys-339. Asn-343 and Asn-357 each carry an N-linked (GlcNAc...) asparagine glycan. Residues Cys-358 and Cys-367 are joined by a disulfide bond.

It belongs to the glycosyl hydrolase 28 family. As to expression, expressed in larval carcasses and gut, and adult gut.

It localises to the secreted. The protein resides in the cell wall. It catalyses the reaction (1,4-alpha-D-galacturonosyl)n+m + H2O = (1,4-alpha-D-galacturonosyl)n + (1,4-alpha-D-galacturonosyl)m.. This is Polygalacturonase from Phaedon cochleariae (Mustard beetle).